A 298-amino-acid chain; its full sequence is UDP-N-acetylenolpyruvoylglucosamine reductase (298 aa).

In terms of domain architecture, FAD-binding PCMH-type spans 27–206; sequence VGGPAQRLYR…QQQIRRLLRQ (180 aa). The active site involves arginine 171. The active-site Proton donor is serine 220. Glutamate 290 is an active-site residue.

It belongs to the MurB family. The cofactor is FAD.

Its subcellular location is the cytoplasm. It carries out the reaction UDP-N-acetyl-alpha-D-muramate + NADP(+) = UDP-N-acetyl-3-O-(1-carboxyvinyl)-alpha-D-glucosamine + NADPH + H(+). Its pathway is cell wall biogenesis; peptidoglycan biosynthesis. Its function is as follows. Cell wall formation. The sequence is that of UDP-N-acetylenolpyruvoylglucosamine reductase from Nitrosococcus oceani (strain ATCC 19707 / BCRC 17464 / JCM 30415 / NCIMB 11848 / C-107).